A 34-amino-acid chain; its full sequence is Aspartate aminotransferase 2 (34 aa).

Belongs to the class-I pyridoxal-phosphate-dependent aminotransferase family. As to quaternary structure, homodimer. Requires pyridoxal 5'-phosphate as cofactor.

The catalysed reaction is L-aspartate + 2-oxoglutarate = oxaloacetate + L-glutamate. Important for the metabolism of amino acids and Krebs-cycle related organic acids. In plants, it is involved in nitrogen metabolism and in aspects of carbon and energy metabolism. This Pseudotsuga menziesii (Douglas-fir) protein is Aspartate aminotransferase 2.